A 299-amino-acid polypeptide reads, in one-letter code: Large ribosomal subunit protein uL18 (299 aa).

The protein belongs to the universal ribosomal protein uL18 family. As to quaternary structure, component of the large ribosomal subunit (LSU). Interacts with Fmr1 to form the RNA-induced silencing complex (RISC), a ribonucleoprotein (RNP) complex involved in translation regulation, other components of the complex are Rm62, RpL11, AGO2 and Dcr-1.

The protein resides in the cytoplasm. Its subcellular location is the nucleus. Component of the ribosome, a large ribonucleoprotein complex responsible for the synthesis of proteins in the cell. The small ribosomal subunit (SSU) binds messenger RNAs (mRNAs) and translates the encoded message by selecting cognate aminoacyl-transfer RNA (tRNA) molecules. The large subunit (LSU) contains the ribosomal catalytic site termed the peptidyl transferase center (PTC), which catalyzes the formation of peptide bonds, thereby polymerizing the amino acids delivered by tRNAs into a polypeptide chain. The nascent polypeptides leave the ribosome through a tunnel in the LSU and interact with protein factors that function in enzymatic processing, targeting, and the membrane insertion of nascent chains at the exit of the ribosomal tunnel. This is Large ribosomal subunit protein uL18 (RpL5) from Drosophila melanogaster (Fruit fly).